The sequence spans 180 residues: UPF0227 protein YcfP (180 aa).

This sequence belongs to the UPF0227 family.

In Escherichia coli O7:K1 (strain IAI39 / ExPEC), this protein is UPF0227 protein YcfP.